Consider the following 240-residue polypeptide: Ribosomal RNA large subunit methyltransferase E (240 aa).

Polar residues predominate over residues 1–13 (MAKKPGSQNTSGR). The tract at residues 1-20 (MAKKPGSQNTSGRGQRDLKV) is disordered. S-adenosyl-L-methionine-binding residues include glycine 85, tryptophan 87, aspartate 113, aspartate 129, and aspartate 153. Lysine 193 acts as the Proton acceptor in catalysis.

Belongs to the class I-like SAM-binding methyltransferase superfamily. RNA methyltransferase RlmE family.

The protein localises to the cytoplasm. It carries out the reaction uridine(2552) in 23S rRNA + S-adenosyl-L-methionine = 2'-O-methyluridine(2552) in 23S rRNA + S-adenosyl-L-homocysteine + H(+). In terms of biological role, specifically methylates the uridine in position 2552 of 23S rRNA at the 2'-O position of the ribose in the fully assembled 50S ribosomal subunit. The protein is Ribosomal RNA large subunit methyltransferase E of Roseobacter denitrificans (strain ATCC 33942 / OCh 114) (Erythrobacter sp. (strain OCh 114)).